A 971-amino-acid chain; its full sequence is Zinc finger CCCH domain-containing protein 7A (971 aa).

TPR repeat units follow at residues 43 to 76 (VRNL…ADYA), 89 to 122 (EKLY…NASN), and 124 to 156 (KALY…VPQD). Thr210 is subject to Phosphothreonine. 2 consecutive C3H1-type zinc fingers follow at residues 634–656 (LCRH…HSLV) and 769–797 (PLQF…HSPE). The C2H2-type zinc finger occupies 857 to 881 (FHCWMCGKNCNSEKQWQGHISSEKH). The C3H1-type 3 zinc-finger motif lies at 906–928 (ICDRYMNGTCPEGNSCKFAHGNA). Residues 924–952 (AHGNAELHEWEERRDALKMKLNKARKDHL) adopt a coiled-coil conformation.

It localises to the nucleus. Functionally, may be a specific regulator of miRNA biogenesis. Binds to microRNAs MIR7-1, MIR16-2 and MIR29A hairpins recognizing the 3'-ATA(A/T)-5' motif in the apical loop. In Homo sapiens (Human), this protein is Zinc finger CCCH domain-containing protein 7A (ZC3H7A).